Consider the following 150-residue polypeptide: Large ribosomal subunit protein bL9 (150 aa).

The protein belongs to the bacterial ribosomal protein bL9 family.

In terms of biological role, binds to the 23S rRNA. The chain is Large ribosomal subunit protein bL9 from Corynebacterium kroppenstedtii (strain DSM 44385 / JCM 11950 / CIP 105744 / CCUG 35717).